The sequence spans 572 residues: Phosphoenolpyruvate-protein phosphotransferase (572 aa).

The Tele-phosphohistidine intermediate role is filled by H191. 2 residues coordinate phosphoenolpyruvate: R298 and R334. Mg(2+) is bound by residues E433 and D457. Residues 456–457 (ND) and R467 each bind phosphoenolpyruvate. The active-site Proton donor is C504.

The protein belongs to the PEP-utilizing enzyme family. In terms of assembly, homodimer. The cofactor is Mg(2+).

The protein resides in the cytoplasm. The enzyme catalyses L-histidyl-[protein] + phosphoenolpyruvate = N(pros)-phospho-L-histidyl-[protein] + pyruvate. In terms of biological role, general (non sugar-specific) component of the phosphoenolpyruvate-dependent sugar phosphotransferase system (sugar PTS). This major carbohydrate active-transport system catalyzes the phosphorylation of incoming sugar substrates concomitantly with their translocation across the cell membrane. Enzyme I transfers the phosphoryl group from phosphoenolpyruvate (PEP) to the phosphoryl carrier protein (HPr). The chain is Phosphoenolpyruvate-protein phosphotransferase from Staphylococcus aureus (strain MSSA476).